The following is an 85-amino-acid chain: Beta-insect depressant toxin Lqh-dprIT3g (85 aa).

An N-terminal signal peptide occupies residues 1-21; that stretch reads MKLLLLLTISASMLIEGLVNA. Positions 22–82 constitute an LCN-type CS-alpha/beta domain; it reads DGYIRGGDGC…EWDYETDTCG (61 aa). 4 disulfides stabilise this stretch: C31/C81, C35/C56, C42/C63, and C46/C65. G82 bears the Glycine amide mark.

It belongs to the long (4 C-C) scorpion toxin superfamily. Sodium channel inhibitor family. Beta subfamily. Expressed by the venom gland.

It is found in the secreted. In terms of biological role, depressant insect beta-toxins cause a transient contraction paralysis followed by a slow flaccid paralysis. They bind voltage-independently at site-4 of sodium channels (Nav) and block action potentials, primarily by depolarizing the axonal membrane and suppressing the sodium current. This depressant toxin is active only on insects. It is found in a relatively small amount in the venom. In Leiurus hebraeus (Hebrew deathstalker scorpion), this protein is Beta-insect depressant toxin Lqh-dprIT3g.